Here is a 460-residue protein sequence, read N- to C-terminus: Proline--tRNA ligase (460 aa).

It belongs to the class-II aminoacyl-tRNA synthetase family. ProS type 3 subfamily. In terms of assembly, homodimer.

Its subcellular location is the cytoplasm. The enzyme catalyses tRNA(Pro) + L-proline + ATP = L-prolyl-tRNA(Pro) + AMP + diphosphate. In terms of biological role, catalyzes the attachment of proline to tRNA(Pro) in a two-step reaction: proline is first activated by ATP to form Pro-AMP and then transferred to the acceptor end of tRNA(Pro). The protein is Proline--tRNA ligase of Methanococcus maripaludis (strain C5 / ATCC BAA-1333).